The following is a 193-amino-acid chain: Peptidyl-tRNA hydrolase (193 aa).

Position 17 (Y17) interacts with tRNA. H22 (proton acceptor) is an active-site residue. Y69, N71, and N117 together coordinate tRNA.

The protein belongs to the PTH family. Monomer.

The protein localises to the cytoplasm. The enzyme catalyses an N-acyl-L-alpha-aminoacyl-tRNA + H2O = an N-acyl-L-amino acid + a tRNA + H(+). In terms of biological role, hydrolyzes ribosome-free peptidyl-tRNAs (with 1 or more amino acids incorporated), which drop off the ribosome during protein synthesis, or as a result of ribosome stalling. Its function is as follows. Catalyzes the release of premature peptidyl moieties from peptidyl-tRNA molecules trapped in stalled 50S ribosomal subunits, and thus maintains levels of free tRNAs and 50S ribosomes. The polypeptide is Peptidyl-tRNA hydrolase (Leifsonia xyli subsp. xyli (strain CTCB07)).